We begin with the raw amino-acid sequence, 305 residues long: Sodium/potassium-transporting ATPase subunit beta-1 (305 aa).

The Cytoplasmic segment spans residues 1–32; the sequence is MAREKSTDDGGGWKKFLWDSEKKQVLGRTGTS. Residues 33 to 53 traverse the membrane as a helical; Signal-anchor for type II membrane protein segment; sequence WFKIFVFYLIFYGCLAGIFIG. Residues 54-305 are Extracellular-facing; that stretch reads TIQVMLLTIS…RFEVKIEVKS (252 aa). An N-linked (GlcNAc...) asparagine glycan is attached at N114. Residues C127 and C150 are joined by a disulfide bond. N159 carries an N-linked (GlcNAc...) asparagine glycan. An intrachain disulfide couples C160 to C176. 2 N-linked (GlcNAc...) asparagine glycosylation sites follow: N194 and N267. A disulfide bridge links C215 with C278.

Belongs to the X(+)/potassium ATPases subunit beta family. As to quaternary structure, the sodium/potassium-transporting ATPase is composed of a catalytic alpha subunit, an auxiliary non-catalytic beta subunit and an additional regulatory subunit.

The protein localises to the cell membrane. In terms of biological role, this is the non-catalytic component of the active enzyme, which catalyzes the hydrolysis of ATP coupled with the exchange of Na(+) and K(+) ions across the plasma membrane. The beta subunit regulates, through assembly of alpha/beta heterodimers, the number of sodium pumps transported to the plasma membrane. This Tetronarce californica (Pacific electric ray) protein is Sodium/potassium-transporting ATPase subunit beta-1 (atp1b1).